A 2003-amino-acid chain; its full sequence is Neurogenic locus notch homolog protein 4 (2003 aa).

Residues 1-23 (MQPPSLLLLLLLLLLLCVSVVRP) form the signal peptide. 4 EGF-like domains span residues 24–63 (RGLLCGSFPEPCANGGTCLSLSLGQGTCQCAPGFLGETCQ), 64–115 (FPDP…ERCQ), 118–155 (LEDPCPPSFCSKRGRCHIQASGRPQCSCMPGWTGEQCQ), and 156–192 (LRDFCSANPCVNGGVCLATYPQIQCHCPPGFEGHACE). Residues 24 to 1447 (RGLLCGSFPE…TAPPANQLPW (1424 aa)) are Extracellular-facing. 48 disulfides stabilise this stretch: cysteine 28–cysteine 41, cysteine 35–cysteine 51, cysteine 53–cysteine 62, cysteine 68–cysteine 80, cysteine 74–cysteine 103, cysteine 105–cysteine 114, cysteine 122–cysteine 133, cysteine 127–cysteine 143, cysteine 145–cysteine 154, cysteine 160–cysteine 171, cysteine 165–cysteine 180, cysteine 182–cysteine 191, cysteine 198–cysteine 211, cysteine 205–cysteine 220, cysteine 222–cysteine 231, cysteine 238–cysteine 249, cysteine 243–cysteine 262, cysteine 264–cysteine 273, cysteine 280–cysteine 291, cysteine 285–cysteine 300, cysteine 302–cysteine 311, cysteine 318–cysteine 332, cysteine 326–cysteine 341, cysteine 343–cysteine 352, cysteine 359–cysteine 370, cysteine 364–cysteine 379, cysteine 381–cysteine 390, cysteine 396–cysteine 407, cysteine 401–cysteine 418, cysteine 420–cysteine 429, cysteine 436–cysteine 452, cysteine 446–cysteine 461, cysteine 463–cysteine 472, cysteine 479–cysteine 490, cysteine 484–cysteine 499, cysteine 501–cysteine 510, cysteine 517–cysteine 528, cysteine 522–cysteine 537, cysteine 539–cysteine 548, cysteine 555–cysteine 566, cysteine 560–cysteine 575, cysteine 577–cysteine 586, cysteine 593–cysteine 604, cysteine 598–cysteine 613, cysteine 615–cysteine 624, cysteine 629–cysteine 640, cysteine 634–cysteine 649, and cysteine 651–cysteine 658. In terms of domain architecture, EGF-like 5; calcium-binding spans 194–232 (DVNECFQDPGPCPKGTSCHNTLGSFQCLCPVGQEGPRCE). Positions 234-274 (RAGPCPPRGCSNGGTCQLMPEKDSTFHLCLCPPGFIGPDCE) constitute an EGF-like 6 domain. The EGF-like 7; calcium-binding domain maps to 276-312 (NPDNCVSHQCQNGGTCQDGLDTYTCLCPETWTGWDCS). Residues 314 to 353 (DVDECETQGPPHCRNGGTCQNSAGSFHCVCVSGWGGTSCE) enclose the EGF-like 8; calcium-binding domain. An EGF-like 9; calcium-binding domain is found at 355 to 391 (NLDDCIAATCAPGSTCIDRVGSFSCLCPPGRTGLLCH). An EGF-like 10 domain is found at 392–430 (LEDMCLSQPCHGDAQCSTNPLTGSTLCLCQPGYSGPTCH). Residues 432–473 (DLDECLMAQQGPSPCEHGGSCLNTPGSFNCLCPPGYTGSRCE) form the EGF-like 11; calcium-binding domain. Residues 475-511 (DHNECLSQPCHPGSTCLDLLATFHCLCPPGLEGQLCE) form the EGF-like 12; calcium-binding domain. Residues 513–549 (ETNECASAPCLNHADCHDLLNGFQCICLPGFSGTRCE) enclose the EGF-like 13; calcium-binding domain. One can recognise an EGF-like 14; calcium-binding domain in the interval 551–587 (DIDECRSSPCANGGQCQDQPGAFHCKCLPGFEGPRCQ). In terms of domain architecture, EGF-like 15; calcium-binding spans 589 to 625 (EVDECLSDPCPVGASCLDLPGAFFCLCPSGFTGQLCE). 14 consecutive EGF-like domains span residues 626–659 (VPLCAPNLCQPKQICKDQKDKANCLCPDGSPGCA), 661–689 (PEDNCTCHHGHCQRSSCVCDVGWTGPECE), 691–727 (ELGGCISAPCAHGGTCYPQPSGYNCTCPTGYTGPTCS), 729–765 (EMTACHSGPCLNGGSCNPSPGGYYCTCPPSHTGPQCQ), 767–803 (STDYCVSAPCFNGGTCVNRPGTFSCLCAMGFQGPRCE), 806–842 (LRPSCADSPCRNRATCQDSPQGPRCLCPTGYTGGSCQ), 844–880 (LMDLCAQKPCPRNSHCLQTGPSFHCLCLQGWTGPLCN), 882–928 (PLSS…SLCQ), 930–966 (HVNPCESRPCQNGATCMAQPSGYLCQCAPGYDGQNCS), 968–1004 (ELDACQSQPCHNHGTCTPKPGGFHCACPPGFVGLRCE), 1006–1044 (DVDECLDQPCHPTGTAACHSLANAFYCQCLPGHTGQWCE), 1046–1085 (EIDPCHSQPCFHGGTCEATAGSPLGFICHCPKGFEGPTCS), 1087–1126 (RAPSCGFHHCHHGGLCLPSPKPGFPPRCACLSGYGGPDCL), and 1130–1171 (APKG…PRCQ). Asparagine 664 carries N-linked (GlcNAc...) asparagine glycosylation. Cystine bridges form between cysteine 665/cysteine 672, cysteine 667/cysteine 677, cysteine 679/cysteine 688, cysteine 695/cysteine 706, cysteine 700/cysteine 715, cysteine 717/cysteine 726, cysteine 733/cysteine 744, cysteine 738/cysteine 753, cysteine 755/cysteine 764, cysteine 771/cysteine 782, cysteine 776/cysteine 791, cysteine 793/cysteine 802, cysteine 810/cysteine 821, cysteine 815/cysteine 830, cysteine 832/cysteine 841, cysteine 848/cysteine 859, cysteine 853/cysteine 868, cysteine 870/cysteine 879, cysteine 886/cysteine 907, cysteine 901/cysteine 916, cysteine 918/cysteine 927, cysteine 934/cysteine 945, cysteine 939/cysteine 954, cysteine 956/cysteine 965, cysteine 972/cysteine 983, cysteine 977/cysteine 992, cysteine 994/cysteine 1003, cysteine 1010/cysteine 1023, cysteine 1015/cysteine 1032, cysteine 1034/cysteine 1043, cysteine 1050/cysteine 1061, cysteine 1055/cysteine 1073, cysteine 1075/cysteine 1084, cysteine 1091/cysteine 1102, cysteine 1096/cysteine 1114, cysteine 1116/cysteine 1125, cysteine 1134/cysteine 1146, cysteine 1140/cysteine 1159, cysteine 1161/cysteine 1170, cysteine 1178/cysteine 1191, cysteine 1187/cysteine 1203, cysteine 1214/cysteine 1238, cysteine 1220/cysteine 1233, cysteine 1229/cysteine 1245, cysteine 1251/cysteine 1277, cysteine 1259/cysteine 1272, and cysteine 1268/cysteine 1284. The N-linked (GlcNAc...) asparagine glycan is linked to asparagine 714. N-linked (GlcNAc...) asparagine glycosylation occurs at asparagine 964. The N-linked (GlcNAc...) asparagine glycan is linked to asparagine 1143. LNR repeat units lie at residues 1170-1213 (CQKP…PWKG), 1214-1250 (CPSHSRCWLLFRDGQCHPQCDSEECLFDGYDCETPPA), and 1251-1294 (CTPA…PEWG). The segment at 1347–1371 (AEEKLGGTRDPTYQERAAPQTQPLG) is disordered. A helical membrane pass occupies residues 1448–1468 (PVLCSPVAGVILLALGALLVL). Over 1469 to 2003 (QLIRRRRREH…PINQGGEGKK (535 aa)) the chain is Cytoplasmic. The interval 1485 to 1508 (PGFTRRPRTQSAPHRRRPPLGEDS) is disordered. Positions 1489-1502 (RRPRTQSAPHRRRP) are enriched in basic residues. ANK repeat units follow at residues 1633-1665 (TGETPLHLAARFSRPTAARRLLEAGANPNQPDR), 1666-1698 (AGRTPLHAAVAADAREVCQLLLRSRQTAVDART), 1700-1732 (DGTTPLMLAARLAVEDLVEELIAAQADVGARDK), 1733-1765 (WGKTALHWAAAVNNARAARSLLQAGADKDAQDN), and 1766-1798 (REQTPLFLAAREGAVEVAQLLLGLGAARELRDQ). Disordered stretches follow at residues 1900–1927 (LSGVGAGGGPTPRGRRFSAGMRGPRPNP) and 1968–2003 (PPPCLTPSPERGSPQLDCGPPALQEMPINQGGEGKK).

This sequence belongs to the NOTCH family. As to quaternary structure, heterodimer of a C-terminal fragment N(TM) and a N-terminal fragment N(EC) which are probably linked by disulfide bonds. Interacts with MAML1, MAML2 and MAML3 which act as transcriptional coactivators for NOTCH4. In terms of assembly, (Microbial infection) Interacts with Epstein-Barr virus (EBV) RK-BARF0. Synthesized in the endoplasmic reticulum as an inactive form which is proteolytically cleaved by a furin-like convertase in the trans-Golgi network before it reaches the plasma membrane to yield an active, ligand-accessible form. Cleavage results in a C-terminal fragment N(TM) and a N-terminal fragment N(EC). Following ligand binding, it is cleaved by TNF-alpha converting enzyme (TACE) to yield a membrane-associated intermediate fragment called notch extracellular truncation (NEXT). This fragment is then cleaved by presenilin dependent gamma-secretase to release a notch-derived peptide containing the intracellular domain (NICD) from the membrane. Post-translationally, phosphorylated. As to expression, highly expressed in the heart, moderately in the lung and placenta and at low levels in the liver, skeletal muscle, kidney, pancreas, spleen, lymph node, thymus, bone marrow and fetal liver. No expression was seen in adult brain or peripheral blood leukocytes.

It localises to the cell membrane. The protein resides in the nucleus. Functionally, functions as a receptor for membrane-bound ligands Jagged1, Jagged2 and Delta1 to regulate cell-fate determination. Upon ligand activation through the released notch intracellular domain (NICD) it forms a transcriptional activator complex with RBPJ/RBPSUH and activates genes of the enhancer of split locus. Affects the implementation of differentiation, proliferation and apoptotic programs. May regulate branching morphogenesis in the developing vascular system. In Homo sapiens (Human), this protein is Neurogenic locus notch homolog protein 4.